The following is a 757-amino-acid chain: Transferrin receptor protein 1 (757 aa).

Over 1–67 the chain is Cytoplasmic; the sequence is MMDQARSAIS…KHRRLNGRLC (67 aa). Residues 1 to 67 are mediates interaction with SH3BP4; the sequence is MMDQARSAIS…KHRRLNGRLC (67 aa). Residues S10 and S19 each carry the phosphoserine modification. The residue at position 20 (Y20) is a Phosphotyrosine. The short motif at 20 to 23 is the Endocytosis signal element; the sequence is YTRF. T21 bears the Phosphothreonine mark. The residue at position 24 (S24) is a Phosphoserine. The short motif at 58 to 61 is the Stop-transfer sequence element; sequence KHRR. Residue C67 is the site of S-palmitoyl cysteine attachment. A helical; Signal-anchor for type II membrane protein membrane pass occupies residues 68 to 88; the sequence is FGTIAVVIFFLIGFMIGYLGY. Residues 89-757 lie on the Extracellular side of the membrane; sequence CKRTEQKDCV…GDIWDIDNEF (669 aa). O-linked (GalNAc...) threonine glycosylation occurs at T103. Residues 220 to 310 enclose the PA domain; that stretch reads SKATTVSGKL…GTGDPYTPGF (91 aa). 2 N-linked (GlcNAc...) asparagine glycosylation sites follow: N248 and N314. The interval 566–757 is ligand-binding; it reads NLDTYEKLIQ…GDIWDIDNEF (192 aa). Residues 643 to 645 carry the Cell attachment site motif; sequence RGD. N-linked (GlcNAc...) asparagine glycans are attached at residues N719 and N724.

This sequence belongs to the peptidase M28 family. M28B subfamily. As to quaternary structure, homodimer; disulfide-linked. Binds one transferrin molecule per subunit. Interacts with SH3BP4. Interacts with STEAP3; facilitates TFRC endocytosis in erythroid precursor cells. Stearoylated by ZDHHC6 which inhibits TFRC-mediated activation of the JNK pathway and promotes mitochondrial fragmentation. Stearoylation does not affect iron uptake. Post-translationally, N- and O-glycosylated, phosphorylated and palmitoylated.

It is found in the cell membrane. Its subcellular location is the melanosome. Cellular uptake of iron occurs via receptor-mediated endocytosis of ligand-occupied transferrin receptor into specialized endosomes. Endosomal acidification leads to iron release. The apotransferrin-receptor complex is then recycled to the cell surface with a return to neutral pH and the concomitant loss of affinity of apotransferrin for its receptor. Transferrin receptor is necessary for development of erythrocytes and the nervous system. Positively regulates T and B cell proliferation through iron uptake. Acts as a lipid sensor that regulates mitochondrial fusion by regulating activation of the JNK pathway. When dietary levels of stearate (C18:0) are low, promotes activation of the JNK pathway, resulting in HUWE1-mediated ubiquitination and subsequent degradation of the mitofusin MFN2 and inhibition of mitochondrial fusion. When dietary levels of stearate (C18:0) are high, TFRC stearoylation inhibits activation of the JNK pathway and thus degradation of the mitofusin MFN2. Mediates uptake of NICOL1 into fibroblasts where it may regulate extracellular matrix production. The sequence is that of Transferrin receptor protein 1 (TFRC) from Cricetulus griseus (Chinese hamster).